The following is a 607-amino-acid chain: Glutamyl-tRNA(Gln) amidotransferase subunit E (607 aa).

The disordered stretch occupies residues 399-428 (GVPEETRGANPDGTTRFLRPRPGAARMYPE).

This sequence belongs to the GatB/GatE family. GatE subfamily. Heterodimer of GatD and GatE.

The catalysed reaction is L-glutamyl-tRNA(Gln) + L-glutamine + ATP + H2O = L-glutaminyl-tRNA(Gln) + L-glutamate + ADP + phosphate + H(+). Allows the formation of correctly charged Gln-tRNA(Gln) through the transamidation of misacylated Glu-tRNA(Gln) in organisms which lack glutaminyl-tRNA synthetase. The reaction takes place in the presence of glutamine and ATP through an activated gamma-phospho-Glu-tRNA(Gln). The GatDE system is specific for glutamate and does not act on aspartate. This is Glutamyl-tRNA(Gln) amidotransferase subunit E from Pyrobaculum neutrophilum (strain DSM 2338 / JCM 9278 / NBRC 100436 / V24Sta) (Thermoproteus neutrophilus).